Reading from the N-terminus, the 228-residue chain is MEIVKSRFKRVCVFCGSSSGKRECYSDAATDLAQELVTRRLNLVYGGGSIGLMGLVSQAVHEAGGHVLGIIPRTLMDKEITGETYGEVIAVADMHERKAEMARHSDCFIALPGGYGTLEELLEVIAWAQLGIHDKPVGLLNVDGYYNYLLTFIDKAVDDGFIKPSQRHIFVSAPNAKELVQKLEAYKPVNDGVIAKSRWEVEKKVQQPQQQQQVVFCSNTSMQTEIAL.

Substrate is bound by residues Glu79, Arg97–Lys98, and Gly114–Glu120.

The protein belongs to the LOG family. As to expression, expressed in roots and shoots. Detected in vascular tissues of roots, cotyledons, and leaves, axillary buds, immature and mature flowers, fruit abscission zones and ovules.

The protein localises to the cytoplasm. Its subcellular location is the nucleus. The enzyme catalyses N(6)-(dimethylallyl)adenosine 5'-phosphate + H2O = N(6)-dimethylallyladenine + D-ribose 5-phosphate. It carries out the reaction 9-ribosyl-trans-zeatin 5'-phosphate + H2O = trans-zeatin + D-ribose 5-phosphate. In terms of biological role, cytokinin-activating enzyme working in the direct activation pathway. Phosphoribohydrolase that converts inactive cytokinin nucleotides to the biologically active free-base forms. This is Cytokinin riboside 5'-monophosphate phosphoribohydrolase LOG5 (LOG5) from Arabidopsis thaliana (Mouse-ear cress).